A 444-amino-acid chain; its full sequence is MHILVVSVNYRTAPVEFREKLTFQAAELERAMTTLQNQKSVLENVIVSTCNRTEIYAVVDQLHTGRYYIKKFLADWFQLEIEEVAPYLTIFEQDGAIDHLFRVTCGLDSMVVGETQILGQIKDSFLEAQQVKATGTIFNELFKQVITLAKRAHSETTIGESAMSVSYAAVELGKKIFGELTDCHVLILGAGKMGELALQNLYGSGARKVTVMNRTLSKAEIMAEKYMGHAKPLSELQCALLEADILISSTGASDYVITKEMMTKVEKMRSGRPLFMVDIAVPRDIDPAIDELEGSFLYDIDDLQGVVEANRAERLKEAEKIQFMIEEEIVLFKTWLSTLGVVPLISALRDKALAIQSETMESLERKIPNLSDRERKVISKHTKSIINQLLKDPILVAKEIAAEEGADEKLALFAKIFDLEMEDVESRAEEVEHKRAWTPSVPSL.

Substrate-binding positions include 49-52 (TCNR), serine 109, 114-116 (ETQ), and glutamine 120. The active-site Nucleophile is cysteine 50. 189-194 (GAGKMG) contacts NADP(+).

It belongs to the glutamyl-tRNA reductase family. In terms of assembly, homodimer.

The enzyme catalyses (S)-4-amino-5-oxopentanoate + tRNA(Glu) + NADP(+) = L-glutamyl-tRNA(Glu) + NADPH + H(+). Its pathway is porphyrin-containing compound metabolism; protoporphyrin-IX biosynthesis; 5-aminolevulinate from L-glutamyl-tRNA(Glu): step 1/2. Functionally, catalyzes the NADPH-dependent reduction of glutamyl-tRNA(Glu) to glutamate 1-semialdehyde (GSA). In Bacillus cereus (strain ZK / E33L), this protein is Glutamyl-tRNA reductase.